The sequence spans 222 residues: UPF0502 protein Shewmr7_1629 (222 aa).

This sequence belongs to the UPF0502 family.

This Shewanella sp. (strain MR-7) protein is UPF0502 protein Shewmr7_1629.